The following is a 185-amino-acid chain: Ribosome-recycling factor (185 aa).

The protein belongs to the RRF family.

Its subcellular location is the cytoplasm. Functionally, responsible for the release of ribosomes from messenger RNA at the termination of protein biosynthesis. May increase the efficiency of translation by recycling ribosomes from one round of translation to another. This is Ribosome-recycling factor from Serratia proteamaculans (strain 568).